The sequence spans 154 residues: SsrA-binding protein (154 aa).

A compositionally biased stretch (basic and acidic residues) spans 123 to 142; it reads AEHDKRHTIKDRDWQREQGR. Positions 123 to 154 are disordered; it reads AEHDKRHTIKDRDWQREQGRLMRHKVSAPHKD. Residues 143–154 show a composition bias toward basic residues; it reads LMRHKVSAPHKD.

Belongs to the SmpB family.

It is found in the cytoplasm. Required for rescue of stalled ribosomes mediated by trans-translation. Binds to transfer-messenger RNA (tmRNA), required for stable association of tmRNA with ribosomes. tmRNA and SmpB together mimic tRNA shape, replacing the anticodon stem-loop with SmpB. tmRNA is encoded by the ssrA gene; the 2 termini fold to resemble tRNA(Ala) and it encodes a 'tag peptide', a short internal open reading frame. During trans-translation Ala-aminoacylated tmRNA acts like a tRNA, entering the A-site of stalled ribosomes, displacing the stalled mRNA. The ribosome then switches to translate the ORF on the tmRNA; the nascent peptide is terminated with the 'tag peptide' encoded by the tmRNA and targeted for degradation. The ribosome is freed to recommence translation, which seems to be the essential function of trans-translation. This is SsrA-binding protein from Leptothrix cholodnii (strain ATCC 51168 / LMG 8142 / SP-6) (Leptothrix discophora (strain SP-6)).